A 102-amino-acid polypeptide reads, in one-letter code: UPF0213 protein Ent638_3592 (102 aa).

In terms of domain architecture, GIY-YIG spans 4-79; that stretch reads VCWFLYLVRT…KQLTKRQKER (76 aa).

It belongs to the UPF0213 family.

This chain is UPF0213 protein Ent638_3592, found in Enterobacter sp. (strain 638).